A 487-amino-acid polypeptide reads, in one-letter code: Glutamyl-tRNA(Gln) amidotransferase subunit A (487 aa).

Catalysis depends on charge relay system residues Lys-80 and Ser-155. Ser-179 functions as the Acyl-ester intermediate in the catalytic mechanism.

Belongs to the amidase family. GatA subfamily. In terms of assembly, heterotrimer of A, B and C subunits.

The catalysed reaction is L-glutamyl-tRNA(Gln) + L-glutamine + ATP + H2O = L-glutaminyl-tRNA(Gln) + L-glutamate + ADP + phosphate + H(+). In terms of biological role, allows the formation of correctly charged Gln-tRNA(Gln) through the transamidation of misacylated Glu-tRNA(Gln) in organisms which lack glutaminyl-tRNA synthetase. The reaction takes place in the presence of glutamine and ATP through an activated gamma-phospho-Glu-tRNA(Gln). This Leptospira interrogans serogroup Icterohaemorrhagiae serovar Lai (strain 56601) protein is Glutamyl-tRNA(Gln) amidotransferase subunit A.